A 565-amino-acid chain; its full sequence is Formate--tetrahydrofolate ligase (565 aa).

Position 65 to 72 (65 to 72 (TPAGEGKT)) interacts with ATP.

The protein belongs to the formate--tetrahydrofolate ligase family.

The catalysed reaction is (6S)-5,6,7,8-tetrahydrofolate + formate + ATP = (6R)-10-formyltetrahydrofolate + ADP + phosphate. It participates in one-carbon metabolism; tetrahydrofolate interconversion. This Syntrophus aciditrophicus (strain SB) protein is Formate--tetrahydrofolate ligase.